The sequence spans 228 residues: Deoxyribose-phosphate aldolase (228 aa).

The active-site Proton donor/acceptor is the D96. K157 acts as the Schiff-base intermediate with acetaldehyde in catalysis. Catalysis depends on K185, which acts as the Proton donor/acceptor.

It belongs to the DeoC/FbaB aldolase family. DeoC type 1 subfamily.

It is found in the cytoplasm. It carries out the reaction 2-deoxy-D-ribose 5-phosphate = D-glyceraldehyde 3-phosphate + acetaldehyde. The protein operates within carbohydrate degradation; 2-deoxy-D-ribose 1-phosphate degradation; D-glyceraldehyde 3-phosphate and acetaldehyde from 2-deoxy-alpha-D-ribose 1-phosphate: step 2/2. Functionally, catalyzes a reversible aldol reaction between acetaldehyde and D-glyceraldehyde 3-phosphate to generate 2-deoxy-D-ribose 5-phosphate. The chain is Deoxyribose-phosphate aldolase from Cyanothece sp. (strain PCC 7425 / ATCC 29141).